The following is a 583-amino-acid chain: Immunity-related GTPase family Q protein (583 aa).

Cys-152 and Cys-158 are joined by a disulfide. A coiled-coil region spans residues 155-179 (SDRCEELERLQVVLRTQAEALQRLL). The LIR 1 signature appears at 186-189 (FEVL). Thr-203 is modified (phosphothreonine). The IRG-type G domain maps to 223-409 (ARLDLAVAGT…PGLGTWLQHA (187 aa)). The disordered stretch occupies residues 322–373 (APLVGVRTDGQGEDPPEVLEEEKAQNASDGNSGDARSEGKKAGIGDSGCTAA). Acidic residues predominate over residues 332 to 341 (QGEDPPEVLE). Positions 381 to 384 (WEVL) match the LIR 2 motif.

The protein belongs to the TRAFAC class dynamin-like GTPase superfamily. IRG family. Interacts (via LIR motif 1) with GABARAPL2. Interacts (via LIR motif 2) with MAP1LC3B/LC3B.

The protein resides in the lysosome. The protein localises to the cytoplasmic vesicle. It is found in the autophagosome. Its function is as follows. Autophagy receptor that specifically promotes clearance of misfolded MHC class I molecules by targeting them to the lysosome for degradation. Acts as a molecular adapter that specifically recognizes and binds (1) misfolded MHC class I molecules following their ubiquitination, as well as (2) autophagy-related proteins, promoting the recruitment of misfolded MHC class I molecules to autophagy machinery for degradation. Degradation of misfolded MHC class I molecules is essential to prevent accumulation of defective MHC class I complexes at the surface of CD8(+) T-cells and prevent a stronger T-cell-mediated response. In contrast to other members of the family, does not show GTPase activity. This is Immunity-related GTPase family Q protein (Irgq) from Mus musculus (Mouse).